The following is a 274-amino-acid chain: NH(3)-dependent NAD(+) synthetase (274 aa).

27–34 (GLSGGIDS) provides a ligand contact to ATP. Mg(2+) is bound at residue aspartate 33. A deamido-NAD(+)-binding site is contributed by arginine 121. Threonine 141 contacts ATP. Residue glutamate 146 coordinates Mg(2+). The ATP site is built by lysine 170 and serine 192.

Belongs to the NAD synthetase family. Homodimer.

It carries out the reaction deamido-NAD(+) + NH4(+) + ATP = AMP + diphosphate + NAD(+) + H(+). It functions in the pathway cofactor biosynthesis; NAD(+) biosynthesis; NAD(+) from deamido-NAD(+) (ammonia route): step 1/1. In terms of biological role, catalyzes the ATP-dependent amidation of deamido-NAD to form NAD. Uses ammonia as a nitrogen source. This Helicobacter hepaticus (strain ATCC 51449 / 3B1) protein is NH(3)-dependent NAD(+) synthetase.